Here is a 490-residue protein sequence, read N- to C-terminus: Probable glycine dehydrogenase (decarboxylating) subunit 2 (490 aa).

The residue at position 273 (lysine 273) is an N6-(pyridoxal phosphate)lysine.

Belongs to the GcvP family. C-terminal subunit subfamily. The glycine cleavage system is composed of four proteins: P, T, L and H. In this organism, the P 'protein' is a heterodimer of two subunits. The cofactor is pyridoxal 5'-phosphate.

The enzyme catalyses N(6)-[(R)-lipoyl]-L-lysyl-[glycine-cleavage complex H protein] + glycine + H(+) = N(6)-[(R)-S(8)-aminomethyldihydrolipoyl]-L-lysyl-[glycine-cleavage complex H protein] + CO2. In terms of biological role, the glycine cleavage system catalyzes the degradation of glycine. The P protein binds the alpha-amino group of glycine through its pyridoxal phosphate cofactor; CO(2) is released and the remaining methylamine moiety is then transferred to the lipoamide cofactor of the H protein. The chain is Probable glycine dehydrogenase (decarboxylating) subunit 2 from Staphylococcus aureus (strain MSSA476).